We begin with the raw amino-acid sequence, 250 residues long: Copper homeostasis protein cutC homolog (250 aa).

The protein belongs to the CutC family.

Involved in copper homeostasis. Affects body morphology and length, egg laying and brood size. In Caenorhabditis elegans, this protein is Copper homeostasis protein cutC homolog (cutc-1).